Here is a 259-residue protein sequence, read N- to C-terminus: Potassium/proton antiporter CemA (259 aa).

4 helical membrane passes run 47-67 (CLLV…EPWV), 136-156 (IITH…YLVM), 184-204 (ILLA…ELLI), and 219-239 (IISS…KYWI).

The protein belongs to the CemA family.

It is found in the plastid. It localises to the chloroplast inner membrane. The catalysed reaction is K(+)(in) + H(+)(out) = K(+)(out) + H(+)(in). Functionally, contributes to K(+)/H(+) antiport activity by supporting proton efflux to control proton extrusion and homeostasis in chloroplasts in a light-dependent manner to modulate photosynthesis. Prevents excessive induction of non-photochemical quenching (NPQ) under continuous-light conditions. Indirectly promotes efficient inorganic carbon uptake into chloroplasts. The protein is Potassium/proton antiporter CemA of Welwitschia mirabilis (Tree tumbo).